Here is a 258-residue protein sequence, read N- to C-terminus: Uroplakin-1a (258 aa).

Residues 1 to 14 (MASAAAATTEKGSP) are Cytoplasmic-facing. A helical transmembrane segment spans residues 15–35 (VVVGLLVMGNIIILLSGLALF). Topologically, residues 36 to 59 (AETVWVTADQYRIYPLMGVSGKDD) are extracellular. The chain crosses the membrane as a helical span at residues 60 to 86 (VFAGAWIAIFCGFSFFVVASFGVGAAL). Topologically, residues 87–91 (CRRRS) are cytoplasmic. The helical transmembrane segment at 92-112 (MILTYLILMLIIYIFECASCI) threads the bilayer. Residues 113-230 (TSYTHRDYMV…HIGHAIDSYT (118 aa)) lie on the Extracellular side of the membrane. Residue asparagine 170 is glycosylated (N-linked (GlcNAc...) asparagine). Residues 231 to 252 (WGISWFGFAILMWTLPVMLIAM) traverse the membrane as a helical segment. The Cytoplasmic segment spans residues 253 to 258 (YFYTTL).

The protein belongs to the tetraspanin (TM4SF) family. In terms of assembly, homodimer; disulfide-linked. Interacts with uroplakin-2 (UPK2). The N-terminus is blocked. In terms of processing, N-glycosylated with high-mannose oligosaccharides. As to expression, bladder epithelium.

Its subcellular location is the membrane. In terms of biological role, component of the asymmetric unit membrane (AUM); a highly specialized biomembrane elaborated by terminally differentiated urothelial cells. May play an important role in normal bladder epithelial physiology, possibly in regulating membrane permeability of superficial umbrella cells or in stabilizing the apical membrane through AUM/cytoskeletal interactions. The polypeptide is Uroplakin-1a (UPK1A) (Bos taurus (Bovine)).